Consider the following 276-residue polypeptide: Urease accessory protein UreD (276 aa).

The protein belongs to the UreD family. In terms of assembly, ureD, UreF and UreG form a complex that acts as a GTP-hydrolysis-dependent molecular chaperone, activating the urease apoprotein by helping to assemble the nickel containing metallocenter of UreC. The UreE protein probably delivers the nickel.

It is found in the cytoplasm. Required for maturation of urease via the functional incorporation of the urease nickel metallocenter. This chain is Urease accessory protein UreD, found in Albidiferax ferrireducens (strain ATCC BAA-621 / DSM 15236 / T118) (Rhodoferax ferrireducens).